The primary structure comprises 72 residues: DNA-directed RNA polymerase subunit omega (72 aa).

This sequence belongs to the RNA polymerase subunit omega family. The RNAP catalytic core consists of 2 alpha, 1 beta, 1 beta' and 1 omega subunit. When a sigma factor is associated with the core the holoenzyme is formed, which can initiate transcription.

The enzyme catalyses RNA(n) + a ribonucleoside 5'-triphosphate = RNA(n+1) + diphosphate. Promotes RNA polymerase assembly. Latches the N- and C-terminal regions of the beta' subunit thereby facilitating its interaction with the beta and alpha subunits. The chain is DNA-directed RNA polymerase subunit omega from Francisella philomiragia subsp. philomiragia (strain ATCC 25017 / CCUG 19701 / FSC 153 / O#319-036).